The following is a 290-amino-acid chain: tRNA dimethylallyltransferase (290 aa).

11–18 (GPTASGKS) provides a ligand contact to ATP. 13–18 (TASGKS) is a substrate binding site. Interaction with substrate tRNA stretches follow at residues 36-39 (DSMQ) and 158-162 (QRIVR).

It belongs to the IPP transferase family. As to quaternary structure, monomer. The cofactor is Mg(2+).

It catalyses the reaction adenosine(37) in tRNA + dimethylallyl diphosphate = N(6)-dimethylallyladenosine(37) in tRNA + diphosphate. In terms of biological role, catalyzes the transfer of a dimethylallyl group onto the adenine at position 37 in tRNAs that read codons beginning with uridine, leading to the formation of N6-(dimethylallyl)adenosine (i(6)A). This chain is tRNA dimethylallyltransferase, found in Bartonella tribocorum (strain CIP 105476 / IBS 506).